A 219-amino-acid chain; its full sequence is Thiamine-phosphate synthase (219 aa).

4-amino-2-methyl-5-(diphosphooxymethyl)pyrimidine contacts are provided by residues 44–48 (QFREK) and N79. D80 and D99 together coordinate Mg(2+). Residue S117 participates in 4-amino-2-methyl-5-(diphosphooxymethyl)pyrimidine binding. Residue 143–145 (TST) participates in 2-[(2R,5Z)-2-carboxy-4-methylthiazol-5(2H)-ylidene]ethyl phosphate binding. Position 146 (K146) interacts with 4-amino-2-methyl-5-(diphosphooxymethyl)pyrimidine. 2-[(2R,5Z)-2-carboxy-4-methylthiazol-5(2H)-ylidene]ethyl phosphate contacts are provided by residues G175 and 195-196 (IS).

It belongs to the thiamine-phosphate synthase family. Mg(2+) is required as a cofactor.

The enzyme catalyses 2-[(2R,5Z)-2-carboxy-4-methylthiazol-5(2H)-ylidene]ethyl phosphate + 4-amino-2-methyl-5-(diphosphooxymethyl)pyrimidine + 2 H(+) = thiamine phosphate + CO2 + diphosphate. The catalysed reaction is 2-(2-carboxy-4-methylthiazol-5-yl)ethyl phosphate + 4-amino-2-methyl-5-(diphosphooxymethyl)pyrimidine + 2 H(+) = thiamine phosphate + CO2 + diphosphate. It carries out the reaction 4-methyl-5-(2-phosphooxyethyl)-thiazole + 4-amino-2-methyl-5-(diphosphooxymethyl)pyrimidine + H(+) = thiamine phosphate + diphosphate. It functions in the pathway cofactor biosynthesis; thiamine diphosphate biosynthesis; thiamine phosphate from 4-amino-2-methyl-5-diphosphomethylpyrimidine and 4-methyl-5-(2-phosphoethyl)-thiazole: step 1/1. Functionally, condenses 4-methyl-5-(beta-hydroxyethyl)thiazole monophosphate (THZ-P) and 2-methyl-4-amino-5-hydroxymethyl pyrimidine pyrophosphate (HMP-PP) to form thiamine monophosphate (TMP). In Bacillus anthracis (strain A0248), this protein is Thiamine-phosphate synthase.